The sequence spans 382 residues: Galactokinase (382 aa).

34–37 (EHTD) lines the substrate pocket. ATP is bound at residue 124–130 (GAGLSSS). Residues S130 and E162 each contribute to the Mg(2+) site. D174 serves as the catalytic Proton acceptor. A substrate-binding site is contributed by Y223.

Belongs to the GHMP kinase family. GalK subfamily.

The protein localises to the cytoplasm. The enzyme catalyses alpha-D-galactose + ATP = alpha-D-galactose 1-phosphate + ADP + H(+). It participates in carbohydrate metabolism; galactose metabolism. Functionally, catalyzes the transfer of the gamma-phosphate of ATP to D-galactose to form alpha-D-galactose-1-phosphate (Gal-1-P). This chain is Galactokinase, found in Salmonella paratyphi A (strain ATCC 9150 / SARB42).